Reading from the N-terminus, the 389-residue chain is NADH-quinone oxidoreductase subunit D (389 aa).

It belongs to the complex I 49 kDa subunit family. NDH-1 is composed of 14 different subunits. Subunits NuoB, C, D, E, F, and G constitute the peripheral sector of the complex.

It localises to the cell inner membrane. The enzyme catalyses a quinone + NADH + 5 H(+)(in) = a quinol + NAD(+) + 4 H(+)(out). Functionally, NDH-1 shuttles electrons from NADH, via FMN and iron-sulfur (Fe-S) centers, to quinones in the respiratory chain. The immediate electron acceptor for the enzyme in this species is believed to be ubiquinone. Couples the redox reaction to proton translocation (for every two electrons transferred, four hydrogen ions are translocated across the cytoplasmic membrane), and thus conserves the redox energy in a proton gradient. The protein is NADH-quinone oxidoreductase subunit D of Rickettsia prowazekii (strain Madrid E).